Reading from the N-terminus, the 190-residue chain is Recombination protein RecR (190 aa).

The C4-type zinc finger occupies 58–73; the sequence is CEQCGALSENELCEIC. The Toprim domain maps to 81–167; sequence NILCIVESPK…TFSKIAQGIP (87 aa).

This sequence belongs to the RecR family.

Functionally, may play a role in DNA repair. It seems to be involved in an RecBC-independent recombinational process of DNA repair. It may act with RecF and RecO. This chain is Recombination protein RecR, found in Campylobacter jejuni subsp. jejuni serotype O:23/36 (strain 81-176).